We begin with the raw amino-acid sequence, 158 residues long: uncharacterized protein (158 aa).

Positions 77–132 are disordered; it reads AIKRNKIGGSKRSEVHSNRSKNYSSKKFRSQKCRRSRQKKRQNKKPNNSRFISSNK. Residues 100–120 show a composition bias toward basic residues; it reads SSKKFRSQKCRRSRQKKRQNK.

This is an uncharacterized protein from Acanthamoeba polyphaga mimivirus (APMV).